A 233-amino-acid chain; its full sequence is uncharacterized protein (233 aa).

This is an uncharacterized protein from Acanthamoeba polyphaga (Amoeba).